The following is a 58-amino-acid chain: Small ribosomal subunit protein bS21 (58 aa).

Basic and acidic residues predominate over residues 32 to 42; sequence IRKREHYEKPS. The disordered stretch occupies residues 32 to 58; that stretch reads IRKREHYEKPSVKRKKKSEAARKRKFK. Residues 43-58 are compositionally biased toward basic residues; the sequence is VKRKKKSEAARKRKFK.

It belongs to the bacterial ribosomal protein bS21 family.

The sequence is that of Small ribosomal subunit protein bS21 from Lachnoclostridium phytofermentans (strain ATCC 700394 / DSM 18823 / ISDg) (Clostridium phytofermentans).